A 216-amino-acid polypeptide reads, in one-letter code: MOB kinase activator 1A (216 aa).

Ser-2 carries the N-acetylserine modification. Phosphothreonine occurs at positions 12 and 35. The residue at position 74 (Thr-74) is a Phosphothreonine; by STK3/MST2. Zn(2+)-binding residues include Cys-79, Cys-84, His-161, and His-166. Thr-181 carries the phosphothreonine modification.

It belongs to the MOB1/phocein family. Binds STK38 and STK38L. Interacts with LATS1 and LATS2. Forms a tripartite complex with STK38 and STK3/MST2. Post-translationally, phosphorylated by STK3/MST2 and STK4/MST1 and this phosphorylation enhances its binding to LATS1. As to expression, adrenal gland, bone marrow, brain, placenta, prostate, salivary gland, skeletal muscle, testis, thymus, thyroid gland, heart, spinal cord, fetal brain and fetal liver.

Its function is as follows. Activator of LATS1/2 in the Hippo signaling pathway which plays a pivotal role in organ size control and tumor suppression by restricting proliferation and promoting apoptosis. The core of this pathway is composed of a kinase cascade wherein STK3/MST2 and STK4/MST1, in complex with its regulatory protein SAV1, phosphorylates and activates LATS1/2 in complex with its regulatory protein MOB1, which in turn phosphorylates and inactivates YAP1 oncoprotein and WWTR1/TAZ. Phosphorylation of YAP1 by LATS1/2 inhibits its translocation into the nucleus to regulate cellular genes important for cell proliferation, cell death, and cell migration. Stimulates the kinase activity of STK38 and STK38L. Acts cooperatively with STK3/MST2 to activate STK38. This chain is MOB kinase activator 1A, found in Homo sapiens (Human).